Reading from the N-terminus, the 145-residue chain is Protein SprT-like (145 aa).

The 137-residue stretch at 5 to 141 folds into the SprT-like domain; sequence NYVKQVSVED…CGRCMGKLRL (137 aa). Histidine 64 lines the Zn(2+) pocket. The active site involves glutamate 65. Histidine 68 lines the Zn(2+) pocket.

This sequence belongs to the SprT family. Zn(2+) is required as a cofactor.

It localises to the cytoplasm. This chain is Protein SprT-like, found in Streptococcus sanguinis (strain SK36).